Reading from the N-terminus, the 212-residue chain is Ribonuclease HII (212 aa).

One can recognise an RNase H type-2 domain in the interval 28–212 (SIIAGVDEVG…KSFAPIRQVV (185 aa)). The a divalent metal cation site is built by Asp34, Glu35, and Asp127.

This sequence belongs to the RNase HII family. Mn(2+) is required as a cofactor. Mg(2+) serves as cofactor.

It localises to the cytoplasm. It carries out the reaction Endonucleolytic cleavage to 5'-phosphomonoester.. Endonuclease that specifically degrades the RNA of RNA-DNA hybrids. This is Ribonuclease HII from Chlamydia caviae (strain ATCC VR-813 / DSM 19441 / 03DC25 / GPIC) (Chlamydophila caviae).